Reading from the N-terminus, the 136-residue chain is Large ribosomal subunit protein uL16 (136 aa).

The protein belongs to the universal ribosomal protein uL16 family. Part of the 50S ribosomal subunit.

Functionally, binds 23S rRNA and is also seen to make contacts with the A and possibly P site tRNAs. The chain is Large ribosomal subunit protein uL16 from Aliivibrio salmonicida (strain LFI1238) (Vibrio salmonicida (strain LFI1238)).